The primary structure comprises 237 residues: Flagellar brake protein YcgR (237 aa).

A PilZ domain is found at 108-225 (QRRRQFRVTT…MERKIQSAVF (118 aa)).

It belongs to the YcgR family. In terms of assembly, monomer. Interacts with the flagellar basal bodies.

The protein localises to the bacterial flagellum basal body. In terms of biological role, acts as a flagellar brake, regulating swimming and swarming in a bis-(3'-5') cyclic diguanylic acid (c-di-GMP)-dependent manner. Binds 1 c-di-GMP dimer per subunit. Increasing levels of c-di-GMP lead to decreased motility. This chain is Flagellar brake protein YcgR, found in Serratia proteamaculans (strain 568).